The primary structure comprises 313 residues: MASVINTNDSALLAQNNLTKSKGILGSAIERLSSGLRINSAKDDAAGQAIANRFTANVKGLTQAARNANDGISIAQTTEGALNEINNNLQRIRELTVQSENGSNSKSDLDSIQKEVTQRLEEIDRISTQTQFNGIKVLNGDVTEMKIQVGANDNETIGIKLGKINSEKLNLKEFSVVEKEAVAAKPAVPAQPAVPADPKNGVAAKPAVPAQPEVKAQEAVKKTDNPLDTLDKALAQVDDMRSSLGAVQNRLESTVNNLNNTVNNLSAARSRIEDADYAVEVSNMSRGQILQQAGTSVLAQANQVPQTVLSLLR.

Coiled coils occupy residues 5 to 33 and 97 to 117; these read INTNDSALLAQNNLTKSKGILGSAIERLS and VQSENGSNSKSDLDSIQKEVT. Repeat copies occupy residues 179-197, 199-217, 255-259, and 262-266. Residues 179 to 217 form a 2 X 19 AA approximate tandem repeats region; that stretch reads KEAVAAKPAVPAQPAVPADPKNGVAAKPAVPAQPEVKAQ. Over residues 190 to 199 the composition is skewed to low complexity; that stretch reads AQPAVPADPK. Positions 190 to 211 are disordered; that stretch reads AQPAVPADPKNGVAAKPAVPAQ. Positions 252-298 form a coiled coil; sequence ESTVNNLNNTVNNLSAARSRIEDADYAVEVSNMSRGQILQQAGTSVL. The segment at 255-266 is 2 X 5 AA approximate repeats of V-N-N-L-N; it reads VNNLNNTVNNLS.

It belongs to the bacterial flagellin family.

It is found in the secreted. The protein localises to the bacterial flagellum. Functionally, flagellin is the subunit protein which polymerizes to form the filaments of bacterial flagella. The polypeptide is Flagellin (fliC) (Xenorhabdus nematophila (Achromobacter nematophilus)).